A 255-amino-acid polypeptide reads, in one-letter code: Kallikrein-15 (255 aa).

The signal sequence occupies residues 1–15; the sequence is MWLLLPLSFLLTSTA. Residues 16–20 constitute a propeptide, activation peptide; that stretch reads QDGGK. The tract at residues 21–253 is serine protease; that stretch reads LLEGEECAPH…YVKWIRETMK (233 aa). A disulfide bridge links cysteine 46 with cysteine 62. Residues histidine 61 and aspartate 105 each act as charge relay system in the active site. 3 disulfides stabilise this stretch: cysteine 137–cysteine 214, cysteine 179–cysteine 193, and cysteine 204–cysteine 229. Residue asparagine 170 is glycosylated (N-linked (GlcNAc...) asparagine). The Charge relay system role is filled by serine 208. An N-linked (GlcNAc...) asparagine glycan is attached at asparagine 231.

It belongs to the peptidase S1 family. Kallikrein subfamily.

It is found in the secreted. Protease whose physiological substrate is not yet known. The chain is Kallikrein-15 (KLK15) from Saguinus oedipus (Cotton-top tamarin).